The following is a 420-amino-acid chain: Serine hydroxymethyltransferase (420 aa).

Residues Leu-121 and 125–127 (GHL) each bind (6S)-5,6,7,8-tetrahydrofolate. Position 230 is an N6-(pyridoxal phosphate)lysine (Lys-230). (6S)-5,6,7,8-tetrahydrofolate is bound by residues Glu-246 and 354 to 356 (SPF).

The protein belongs to the SHMT family. In terms of assembly, homodimer. It depends on pyridoxal 5'-phosphate as a cofactor.

Its subcellular location is the cytoplasm. The catalysed reaction is (6R)-5,10-methylene-5,6,7,8-tetrahydrofolate + glycine + H2O = (6S)-5,6,7,8-tetrahydrofolate + L-serine. It participates in one-carbon metabolism; tetrahydrofolate interconversion. It functions in the pathway amino-acid biosynthesis; glycine biosynthesis; glycine from L-serine: step 1/1. In terms of biological role, catalyzes the reversible interconversion of serine and glycine with tetrahydrofolate (THF) serving as the one-carbon carrier. This reaction serves as the major source of one-carbon groups required for the biosynthesis of purines, thymidylate, methionine, and other important biomolecules. Also exhibits THF-independent aldolase activity toward beta-hydroxyamino acids, producing glycine and aldehydes, via a retro-aldol mechanism. The protein is Serine hydroxymethyltransferase of Rickettsia prowazekii (strain Madrid E).